Here is a 304-residue protein sequence, read N- to C-terminus: MAKQLSIPSATSGSKSHSLAWRPYYEMTKPKVVALMLLTVLVGMCLAVPGSVPLQPLVIGMIGIGMMAGAAAAFNHLIDRKIDGLMARTYNRPLPKGRVSIPKALTFAISLAALGFVLLYTLVNELTAWLTFASLIGYALVYTAYLKRATPQNIVVGGLAGAMPPLLGWTSVTGEFHGHALLLVIIIFAWTPPHFWALAIHRKAEYAKVDIPMLPVTHGTEFTKTCILLYTVLLAIACLLPVLVGMCGPVYLVGSTLLSCGFIYKAWELKFDDKPGLAMQVFRFSIYHLMLLFLVLLVDHYLWV.

9 consecutive transmembrane segments (helical) span residues 32–52 (VVAL…PGSV), 54–74 (LQPL…AAAF), 104–124 (ALTF…TLVN), 126–146 (LTAW…TAYL), 154–174 (IVVG…SVTG), 180–200 (ALLL…ALAI), 226–246 (CILL…LVGM), 247–267 (CGPV…YKAW), and 284–304 (FSIY…YLWV).

The protein belongs to the UbiA prenyltransferase family. Protoheme IX farnesyltransferase subfamily.

The protein resides in the cell inner membrane. The catalysed reaction is heme b + (2E,6E)-farnesyl diphosphate + H2O = Fe(II)-heme o + diphosphate. The protein operates within porphyrin-containing compound metabolism; heme O biosynthesis; heme O from protoheme: step 1/1. In terms of biological role, converts heme B (protoheme IX) to heme O by substitution of the vinyl group on carbon 2 of heme B porphyrin ring with a hydroxyethyl farnesyl side group. The polypeptide is Protoheme IX farnesyltransferase (Shewanella sediminis (strain HAW-EB3)).